A 5635-amino-acid chain; its full sequence is Hemicentin-1 (5635 aa).

Residues 1-21 (MISWEVVHTVFLFALLYSSLA) form the signal peptide. A VWFA domain is found at 41–216 (TLAFVFDVTG…EVLKWVEEAV (176 aa)). 2 N-linked (GlcNAc...) asparagine glycosylation sites follow: asparagine 349 and asparagine 390. 44 Ig-like C2-type domains span residues 431–517 (PKVT…FDVS), 520–607 (PPVI…VFLT), 612–697 (PKVT…STLR), 702–788 (PKLM…ITLD), 793–883 (PVFI…TTVT), 890–976 (PLIG…TSVV), 981–1067 (PTIQ…VQLT), 1072–1166 (PRVF…VKLN), 1171–1255 (PKIQ…TEIT), 1262–1354 (PTVE…YNLK), 1358–1447 (PPVI…FNID), 1452–1541 (PTII…IKLT), 1546–1634 (PSIK…FHVD), 1638–1724 (PPMI…KEIK), 1733–1821 (PAIE…FEVT), 1826–1914 (PTIK…IQLH), 1919–2007 (PSLE…YSLQ), 2012–2097 (PSIS…RDID), 2104–2190 (PNIM…YNVN), 2195–2285 (PNIG…YNLQ), 2290–2379 (PTIT…YDLS), 2384–2470 (PSII…RKIF), 2478–2564 (PHIV…RSFS), 2571–2662 (PTIA…YEVK), 2666–2763 (PPII…VNIQ), 2766–2864 (PSFQ…YDVR), 2868–2959 (PPII…FNLN), 2964–3051 (PSVI…FSLT), 3056–3146 (PSIK…FHLN), 3151–3240 (PSIE…YFLS), 3245–3335 (PSVA…FNLN), 3340–3429 (PTIR…YNLQ), 3434–3516 (PNMD…GEVS), 3527–3615 (PHIN…YLVR), 3620–3708 (PNIA…FILT), 3713–3797 (PNIK…RRID), 3804–3892 (PSIA…VDLT), 3897–3983 (PSIA…VTLH), 3988–4076 (PVIQ…LNVQ), 4079–4164 (PVIS…TKLT), 4169–4255 (PRIR…VSLT), 4260–4344 (PTFT…GFVY), 4348–4435 (PPVF…MSLT), and 4440–4527 (PIIT…VIVQ). A disulfide bond links cysteine 451 and cysteine 499. 4 N-linked (GlcNAc...) asparagine glycosylation sites follow: asparagine 528, asparagine 550, asparagine 573, and asparagine 620. A disulfide bond links cysteine 541 and cysteine 591. Cysteine 633 and cysteine 681 are disulfide-bonded. Asparagine 693 carries N-linked (GlcNAc...) asparagine glycosylation. Cysteine 723 and cysteine 772 are oxidised to a cystine. The N-linked (GlcNAc...) asparagine glycan is linked to asparagine 809. Cystine bridges form between cysteine 814/cysteine 867 and cysteine 911/cysteine 960. N-linked (GlcNAc...) asparagine glycosylation occurs at asparagine 970. 2 cysteine pairs are disulfide-bonded: cysteine 1002-cysteine 1051 and cysteine 1101-cysteine 1150. The N-linked (GlcNAc...) asparagine glycan is linked to asparagine 1158. Cysteines 1192 and 1241 form a disulfide. Asparagine 1272 carries N-linked (GlcNAc...) asparagine glycosylation. Cysteine 1288 and cysteine 1338 form a disulfide bridge. The N-linked (GlcNAc...) asparagine glycan is linked to asparagine 1369. 2 cysteine pairs are disulfide-bonded: cysteine 1382–cysteine 1431 and cysteine 1475–cysteine 1525. Asparagine 1552 is a glycosylation site (N-linked (GlcNAc...) asparagine). 4 disulfides stabilise this stretch: cysteine 1569–cysteine 1618, cysteine 1663–cysteine 1712, cysteine 1756–cysteine 1805, and cysteine 1848–cysteine 1898. Asparagine 1929 is a glycosylation site (N-linked (GlcNAc...) asparagine). 2 disulfides stabilise this stretch: cysteine 1942/cysteine 1991 and cysteine 2033/cysteine 2083. N-linked (GlcNAc...) asparagine glycans are attached at residues asparagine 2112 and asparagine 2155. 3 cysteine pairs are disulfide-bonded: cysteine 2125–cysteine 2174, cysteine 2218–cysteine 2269, and cysteine 2314–cysteine 2363. An N-linked (GlcNAc...) asparagine glycan is attached at asparagine 2395. 3 cysteine pairs are disulfide-bonded: cysteine 2408/cysteine 2457, cysteine 2501/cysteine 2550, and cysteine 2597/cysteine 2646. N-linked (GlcNAc...) asparagine glycosylation occurs at asparagine 2689. Disulfide bonds link cysteine 2696/cysteine 2745 and cysteine 2799/cysteine 2848. The N-linked (GlcNAc...) asparagine glycan is linked to asparagine 2887. A disulfide bond links cysteine 2894 and cysteine 2943. Asparagine 2973 is a glycosylation site (N-linked (GlcNAc...) asparagine). Intrachain disulfides connect cysteine 2986–cysteine 3035, cysteine 3081–cysteine 3130, cysteine 3173–cysteine 3224, cysteine 3268–cysteine 3319, cysteine 3364–cysteine 3413, and cysteine 3457–cysteine 3506. Residues asparagine 3221 and asparagine 3300 are each glycosylated (N-linked (GlcNAc...) asparagine). An N-linked (GlcNAc...) asparagine glycan is attached at asparagine 3530. Disulfide bonds link cysteine 3550/cysteine 3599 and cysteine 3643/cysteine 3692. 2 N-linked (GlcNAc...) asparagine glycosylation sites follow: asparagine 3689 and asparagine 3727. Cysteine 3734 and cysteine 3783 are joined by a disulfide. Asparagine 3812 carries an N-linked (GlcNAc...) asparagine glycan. Intrachain disulfides connect cysteine 3825-cysteine 3876, cysteine 3918-cysteine 3967, cysteine 4009-cysteine 4058, cysteine 4100-cysteine 4148, cysteine 4190-cysteine 4239, cysteine 4281-cysteine 4328, cysteine 4371-cysteine 4419, cysteine 4461-cysteine 4509, cysteine 4541-cysteine 4578, cysteine 4545-cysteine 4583, cysteine 4556-cysteine 4568, cysteine 4598-cysteine 4635, cysteine 4602-cysteine 4640, cysteine 4613-cysteine 4625, cysteine 4655-cysteine 4692, cysteine 4659-cysteine 4697, cysteine 4670-cysteine 4682, cysteine 4712-cysteine 4749, cysteine 4716-cysteine 4754, cysteine 4727-cysteine 4739, cysteine 4769-cysteine 4806, cysteine 4773-cysteine 4811, cysteine 4784-cysteine 4796, cysteine 4826-cysteine 4863, cysteine 4830-cysteine 4868, and cysteine 4841-cysteine 4853. N-linked (GlcNAc...) asparagine glycosylation occurs at asparagine 4029. N-linked (GlcNAc...) asparagine glycosylation is found at asparagine 4401 and asparagine 4491. TSP type-1 domains are found at residues 4529-4584 (HGGF…KPCP), 4586-4641 (DGSW…RPCP), 4643-4698 (HGAW…RNCP), 4700-4755 (HGKW…DPCP), 4757-4812 (HGNW…DMCP), and 4814-4869 (DGSW…QACP). Asparagine 4606 is a glycosylation site (N-linked (GlcNAc...) asparagine). The region spanning 4871–5093 (GPQRARGSVI…SKGDRSNQCP (223 aa)) is the Nidogen G2 beta-barrel domain. N-linked (GlcNAc...) asparagine glycans are attached at residues asparagine 4894 and asparagine 5040. The 40-residue stretch at 5107 to 5146 (DEDECAAGNPCSHSCHNAMGTYYCSCPKGLTIAADGRTCQ) folds into the EGF-like 1; calcium-binding domain. Cystine bridges form between cysteine 5111–cysteine 5121, cysteine 5117–cysteine 5130, and cysteine 5132–cysteine 5145. The EGF-like 2; calcium-binding domain occupies 5147–5191 (DIDECALGRHTCHAGQDCDNTIGSYRCVVRCGSGFRRTSDGLSCQ). Positions 5192-5229 (DINECQESSPCHQRCFNAIGSFHCGCEPGYQLKGRKCM) constitute an EGF-like 3; calcium-binding domain. Intrachain disulfides connect cysteine 5196–cysteine 5206, cysteine 5202–cysteine 5215, and cysteine 5217–cysteine 5228. Residues 5230–5271 (DVNECRQNVCRPDQHCKNTRGGYKCIDLCPNGMTKAENGTCI) enclose the EGF-like 4; calcium-binding domain. An N-linked (GlcNAc...) asparagine glycan is attached at asparagine 5267. Positions 5272-5307 (DIDECKDGTHQCRYNQICENTRGSYRCVCPRGYRSQ) constitute an EGF-like 5; calcium-binding domain. Cystine bridges form between cysteine 5276–cysteine 5289, cysteine 5283–cysteine 5298, cysteine 5319–cysteine 5330, cysteine 5326–cysteine 5339, cysteine 5341–cysteine 5354, cysteine 5436–cysteine 5446, cysteine 5442–cysteine 5455, and cysteine 5457–cysteine 5470. Positions 5315–5355 (DINECEQVPKPCAHQCSNTPGSFKCICPPGQHLLGDGKSCA) constitute an EGF-like 6; calcium-binding domain. An EGF-like 7; calcium-binding domain is found at 5432–5471 (DIDECENTDACQHECKNTFGSYQCICPPGYQLTHNGKTCQ). Asparagine 5615 carries N-linked (GlcNAc...) asparagine glycosylation.

In terms of tissue distribution, expressed in hair follicles and in the dermis (at protein level). Expressed in skin fibroblasts and retinal pigment epithelium (RPE) cells.

The protein resides in the secreted. It is found in the extracellular space. The protein localises to the extracellular matrix. Its subcellular location is the basement membrane. It localises to the cytoplasm. The protein resides in the cell junction. It is found in the cleavage furrow. In terms of biological role, involved in transforming growth factor beta-mediated rearrangement of the podocyte cytoskeleton which includes reduction of F-actin fibers and broadening, flattening and elongation of podocytes. Plays a role in basement membrane organization. May promote cleavage furrow maturation during cytokinesis in preimplantation embryos. May play a role in the architecture of adhesive and flexible epithelial cell junctions. May play a role during myocardial remodeling by imparting an effect on cardiac fibroblast migration. This Homo sapiens (Human) protein is Hemicentin-1 (HMCN1).